Consider the following 699-residue polypeptide: Polyribonucleotide nucleotidyltransferase (699 aa).

Residues Asp-488 and Asp-494 each contribute to the Mg(2+) site. The KH domain maps to 555–614 (PRIYSIKVNPDKIKDVIGKGGSVIRSLTEETNTIIDIEDNGIIKIVALDYDKAKQAIRRI). Residues 624 to 692 (GAVYTGKVSH…RQGRIRLSMK (69 aa)) enclose the S1 motif domain.

The protein belongs to the polyribonucleotide nucleotidyltransferase family. Component of the RNA degradosome, which is a multiprotein complex involved in RNA processing and mRNA degradation. It depends on Mg(2+) as a cofactor.

The protein localises to the cytoplasm. It carries out the reaction RNA(n+1) + phosphate = RNA(n) + a ribonucleoside 5'-diphosphate. Its function is as follows. Involved in mRNA degradation. Catalyzes the phosphorolysis of single-stranded polyribonucleotides processively in the 3'- to 5'-direction. The polypeptide is Polyribonucleotide nucleotidyltransferase (Blochmanniella pennsylvanica (strain BPEN)).